The primary structure comprises 148 residues: Protein ADM2 (148 aa).

The first 24 residues, methionine 1–serine 24, serve as a signal peptide directing secretion. Positions arginine 25–proline 98 are excised as a propeptide. 2 disordered regions span residues serine 26 to proline 57 and arginine 70 to threonine 101. A disulfide bridge connects residues cysteine 110 and cysteine 115. A Tyrosine amide modification is found at tyrosine 147.

The protein belongs to the adrenomedullin family. As to expression, expressed in the esophagus, stomach, jejunum, ileum, ileocecum, ascending colon, transverse colon, descending colon and rectum. Expressed in myocardial cells of the heart, renal tubular cells, hypothalamus, and pituitary.

The protein localises to the secreted. Intermedin/ADM2 is a peptide hormone that plays a role as physiological regulator of gastrointestinal and cardiovascular bioactivities mediated by the CALCRL-RAMPs receptor complexes. Activates the cAMP-dependent pathway through interaction with CALCRL-RAMP3 receptor complex. This Homo sapiens (Human) protein is Protein ADM2.